The sequence spans 344 residues: Phenylalanine--tRNA ligase alpha subunit (344 aa).

Mg(2+) is bound at residue E258.

This sequence belongs to the class-II aminoacyl-tRNA synthetase family. Phe-tRNA synthetase alpha subunit type 1 subfamily. As to quaternary structure, tetramer of two alpha and two beta subunits. Mg(2+) serves as cofactor.

The protein localises to the cytoplasm. It carries out the reaction tRNA(Phe) + L-phenylalanine + ATP = L-phenylalanyl-tRNA(Phe) + AMP + diphosphate + H(+). This chain is Phenylalanine--tRNA ligase alpha subunit, found in Thiobacillus denitrificans (strain ATCC 25259 / T1).